We begin with the raw amino-acid sequence, 487 residues long: NADH-quinone oxidoreductase subunit N (487 aa).

Transmembrane regions (helical) follow at residues 7–27 (LTLI…ILIT), 37–57 (LVSI…APAL), 81–101 (FAKI…PAFF), 112–132 (PVLV…GDLI), 166–186 (FVLG…VYGF), 207–227 (ALFG…AVPF), 237–257 (GAPT…AVAL), 276–296 (IVIF…IGQT), 307–327 (INNV…GLSA), 329–349 (LTYL…LLML), 373–393 (LAWC…LLGF), 407–427 (DMVL…FYYI), and 452–472 (VLLI…TGWL).

The protein belongs to the complex I subunit 2 family. NDH-1 is composed of 14 different subunits. Subunits NuoA, H, J, K, L, M, N constitute the membrane sector of the complex.

The protein localises to the cell inner membrane. It carries out the reaction a quinone + NADH + 5 H(+)(in) = a quinol + NAD(+) + 4 H(+)(out). In terms of biological role, NDH-1 shuttles electrons from NADH, via FMN and iron-sulfur (Fe-S) centers, to quinones in the respiratory chain. The immediate electron acceptor for the enzyme in this species is believed to be ubiquinone. Couples the redox reaction to proton translocation (for every two electrons transferred, four hydrogen ions are translocated across the cytoplasmic membrane), and thus conserves the redox energy in a proton gradient. The protein is NADH-quinone oxidoreductase subunit N of Erythrobacter litoralis (strain HTCC2594).